Consider the following 231-residue polypeptide: RNA pyrophosphohydrolase (231 aa).

The region spanning 6–149 is the Nudix hydrolase domain; the sequence is GFRPNVGIIL…KRDVYQLALT (144 aa). The short motif at 38-59 is the Nudix box element; sequence GGIKYGETPEQAMYRELHEEIG. The tract at residues 168 to 200 is disordered; that stretch reads VHHGRHGSGQRYAQQPGQPPTLAQRRPLQPVTQ.

It belongs to the Nudix hydrolase family. RppH subfamily. The cofactor is a divalent metal cation.

Functionally, accelerates the degradation of transcripts by removing pyrophosphate from the 5'-end of triphosphorylated RNA, leading to a more labile monophosphorylated state that can stimulate subsequent ribonuclease cleavage. The chain is RNA pyrophosphohydrolase from Cupriavidus pinatubonensis (strain JMP 134 / LMG 1197) (Cupriavidus necator (strain JMP 134)).